Reading from the N-terminus, the 382-residue chain is uncharacterized protein (382 aa).

Transmembrane regions (helical) follow at residues 8 to 28 (VMLL…LNTL), 45 to 65 (MVSS…GYLI), 75 to 95 (YLAS…VGFW), 102 to 122 (FIAG…LMCS), 131 to 151 (LLAA…LLVS), 157 to 177 (LLHV…PLLF), 204 to 224 (LGVN…GLMP), 231 to 251 (GMAN…GILG), 270 to 290 (VQVF…AMAP), 291 to 311 (ALFI…AWAC), 325 to 345 (ALLL…AMLM), and 349 to 369 (SDNL…LMLL).

Belongs to the major facilitator superfamily. YcaD (TC 2.A.1.26) family.

The protein resides in the cell inner membrane. This is an uncharacterized protein from Salmonella newport (strain SL254).